The following is a 524-amino-acid chain: Cysteine--tRNA ligase (524 aa).

Zn(2+) is bound at residue cysteine 29. The short motif at 31 to 41 (PTVQAAPHVGH) is the 'HIGH' region element. Zn(2+)-binding residues include cysteine 207, histidine 232, and glutamate 236. The segment covering 246–258 (ARPASNAASADSP) has biased composition (low complexity). The segment at 246–273 (ARPASNAASADSPGPGGGEPGGGEPSSG) is disordered. Positions 259 to 270 (GPGGGEPGGGEP) are enriched in gly residues. Positions 291-295 (KMSKS) match the 'KMSKS' region motif. Residue lysine 294 coordinates ATP.

The protein belongs to the class-I aminoacyl-tRNA synthetase family. As to quaternary structure, monomer. Zn(2+) serves as cofactor.

Its subcellular location is the cytoplasm. The enzyme catalyses tRNA(Cys) + L-cysteine + ATP = L-cysteinyl-tRNA(Cys) + AMP + diphosphate. This is Cysteine--tRNA ligase from Frankia casuarinae (strain DSM 45818 / CECT 9043 / HFP020203 / CcI3).